Here is a 382-residue protein sequence, read N- to C-terminus: MSINVFWFLPTHGDGHYLGSSEGARAVDYSYLQQIAQAADRLGFGGVLIPTGRSCEDSWLVAASLIPVTQRLKFLVALRPGIISPTLAARQAATLDRLSNGRALFNLVTGGDPEELAAEGLHLNHTERYEASAEFTHVWRKVLEGETVDFAGKHIQVKGAKLLFPPVQHPRPPLYFGGSSAAAQDLAAEQVELYLTWGEPPEQVKEKIEEVRAKAAAKGRTVRFGIRLHVIVRETTEEAWRAANRLIANLDDKTIADAQQAFAGFDSVGQQRMAALHGGKKDNLEISPNLWAGVGLVRGGAGTALVGDGPTVAQRIQEYADLGIDTFVFSGYPHLEEAYRVSELLFPHLDLATTELPTQRPATQPQGEVVANIYVPQKVSQS.

The protein belongs to the SsuD family. As to quaternary structure, homotetramer.

It carries out the reaction an alkanesulfonate + FMNH2 + O2 = an aldehyde + FMN + sulfite + H2O + 2 H(+). Catalyzes the desulfonation of aliphatic sulfonates. The chain is Alkanesulfonate monooxygenase from Yersinia pestis bv. Antiqua (strain Antiqua).